Here is a 293-residue protein sequence, read N- to C-terminus: D-alanine--D-alanine ligase (293 aa).

The 194-residue stretch at 98 to 291 folds into the ATP-grasp domain; the sequence is KIIWEQHSLT…FNKLVTSIIN (194 aa). Position 124-177 (124-177) interacts with ATP; it reads NFPLPWAVKPTLEGSSIGISKVDNQMQLNDALMLAWQYAPYALIEQWIKGDEYT. Residues Asp245, Glu258, and Asn260 each coordinate Mg(2+).

The protein belongs to the D-alanine--D-alanine ligase family. Mg(2+) serves as cofactor. Requires Mn(2+) as cofactor.

The protein localises to the cytoplasm. The enzyme catalyses 2 D-alanine + ATP = D-alanyl-D-alanine + ADP + phosphate + H(+). The protein operates within cell wall biogenesis; peptidoglycan biosynthesis. Its function is as follows. Cell wall formation. The polypeptide is D-alanine--D-alanine ligase (Vesicomyosocius okutanii subsp. Calyptogena okutanii (strain HA)).